The chain runs to 94 residues: Integration host factor subunit beta (94 aa).

It belongs to the bacterial histone-like protein family. Heterodimer of an alpha and a beta chain.

This protein is one of the two subunits of integration host factor, a specific DNA-binding protein that functions in genetic recombination as well as in transcriptional and translational control. This Edwardsiella ictaluri (strain 93-146) protein is Integration host factor subunit beta.